We begin with the raw amino-acid sequence, 318 residues long: Mevalonate 3-kinase (318 aa).

A substrate-binding site is contributed by Leu19. ATP-binding positions include 96-100 (YSSQN) and 105-108 (SGSS). Glu140 and Arg144 together coordinate substrate. ATP contacts are provided by Arg185 and Ser188.

The protein belongs to the GHMP kinase family. Homodimer.

The enzyme catalyses (R)-mevalonate + ATP = (R)-3-phosphomevalonate + ADP + H(+). Its pathway is isoprenoid biosynthesis; isopentenyl diphosphate biosynthesis via mevalonate pathway. Its function is as follows. Catalyzes the phosphorylation of mevalonate (MVA) to yield mevalonate-3-phosphate. Functions in an alternative mevalonate pathway, only present in extreme acidophiles of the Thermoplasmatales order, which passes through mevalonate 3-phosphate rather than mevalonate 5-phosphate. The sequence is that of Mevalonate 3-kinase from Thermoplasma acidophilum (strain ATCC 25905 / DSM 1728 / JCM 9062 / NBRC 15155 / AMRC-C165).